Reading from the N-terminus, the 154-residue chain is Anaerobic ribonucleoside-triphosphate reductase-activating protein (154 aa).

[4Fe-4S] cluster contacts are provided by cysteine 26, cysteine 30, and cysteine 33. S-adenosyl-L-methionine-binding positions include 32 to 34 (GCY) and glycine 74.

It belongs to the organic radical-activating enzymes family. As to quaternary structure, forms a tetramer composed of two NrdD and two NrdG subunits. Requires [4Fe-4S] cluster as cofactor.

The protein localises to the cytoplasm. It carries out the reaction glycyl-[protein] + reduced [flavodoxin] + S-adenosyl-L-methionine = glycin-2-yl radical-[protein] + semiquinone [flavodoxin] + 5'-deoxyadenosine + L-methionine + H(+). Its function is as follows. Activation of anaerobic ribonucleoside-triphosphate reductase under anaerobic conditions by generation of an organic free radical, using S-adenosylmethionine and reduced flavodoxin as cosubstrates to produce 5'-deoxy-adenosine. In Salmonella typhi, this protein is Anaerobic ribonucleoside-triphosphate reductase-activating protein (nrdG).